Reading from the N-terminus, the 469-residue chain is MTSQLAKKGEAWSARFSEPMSDLVKRYTASVFFDKRLALFDIQGSLAHAAMLAKQGIIAEADRAEIERGMTQIRGEIESGAFEWKLDLEDVHLNIEARLTALVGDAGKRLHTGRSRNDQVATDIRLWLRSEIDSIVGLLGDLRGALLDLAEKNADTILPGFTHLQVAQPVTFGHHLMAYVEMFTRDAERMADCRRRVNRLPLGAAALAGTSYPIDREFVATQLGFDGVCRNSLDAVSDRDFAIEFLAAASLIMTHVSRFSEELVIWMSPRVGFIDIADRFCTGSSIMPQKKNPDVPELARGKTGRVYGHLTGLLTLMKGQPLAYNKDNQEDKEPLFDTVDTVVDTLRIFADMVPGISVKPDNMRAAALQGYATATDLADYLVKRGLPFRDAHEAVAHAVRACDDRHCDLADLTVEQLREVSGLGDKASLIGDDVHSVLTLEGSVASRNHIGGTAPDQVRAAIAAARKAL.

The protein belongs to the lyase 1 family. Argininosuccinate lyase subfamily.

It localises to the cytoplasm. The enzyme catalyses 2-(N(omega)-L-arginino)succinate = fumarate + L-arginine. It participates in amino-acid biosynthesis; L-arginine biosynthesis; L-arginine from L-ornithine and carbamoyl phosphate: step 3/3. This is Argininosuccinate lyase from Cupriavidus metallidurans (strain ATCC 43123 / DSM 2839 / NBRC 102507 / CH34) (Ralstonia metallidurans).